The chain runs to 327 residues: Zinc transport protein ZntB (327 aa).

Residues 1–273 (MEAIKGSDVN…ARRTYTMSLM (273 aa)) are Cytoplasmic-facing. A helical membrane pass occupies residues 274–294 (AMVFLPSTFLTGLFGVNLGGI). The Periplasmic portion of the chain corresponds to 295–300 (PGGGWQ). A helical membrane pass occupies residues 301 to 321 (FGFSIFCILLVVLIGGVALWL). Topologically, residues 322-327 (YRSKWL) are cytoplasmic.

It belongs to the CorA metal ion transporter (MIT) (TC 1.A.35) family.

The protein resides in the cell inner membrane. It carries out the reaction Zn(2+)(out) + H(+)(out) = Zn(2+)(in) + H(+)(in). Functionally, zinc transporter. Acts as a Zn(2+):proton symporter, which likely mediates zinc ion uptake. This is Zinc transport protein ZntB from Shigella flexneri serotype 5b (strain 8401).